We begin with the raw amino-acid sequence, 462 residues long: Glutamate--tRNA ligase 2 (462 aa).

Residues 8-18 carry the 'HIGH' region motif; it reads PSPTGYLHIGG. The short motif at 236-240 is the 'KMSKS' region element; sequence KLSKR. Lys239 contacts ATP.

Belongs to the class-I aminoacyl-tRNA synthetase family. Glutamate--tRNA ligase type 1 subfamily. Monomer.

The protein resides in the cytoplasm. It carries out the reaction tRNA(Glu) + L-glutamate + ATP = L-glutamyl-tRNA(Glu) + AMP + diphosphate. Functionally, catalyzes the attachment of glutamate to tRNA(Glu) in a two-step reaction: glutamate is first activated by ATP to form Glu-AMP and then transferred to the acceptor end of tRNA(Glu). The polypeptide is Glutamate--tRNA ligase 2 (Nitratiruptor sp. (strain SB155-2)).